The chain runs to 505 residues: MDKLQRDGKEDTPRQRRFLYPLLFQEDLYAIAYDHYFNRSSSFEPMENSSSNDRFSFLTVKRLISRIRQQNGSIVPFVNCDQTQLVGHNRSFYSELVLGGLTAVPEVPFSIRSKHSLERMNEWTSFRSIHSIFPLMEDKIPHSNFILDIRIPHLTHPEILVRTFRRWIQDAPSLHSLRSVLHEHRNLIISSNLDQLILIASKENTRLSLFLWNYYAYECESLLVPLWKRFSYSRSLPYESFIERTPFYRKIEHIVIFYHKYLKKSLWFLKDPSIHYVKHRERSIIALRGTYLLAKKWRYHITNFWQCHFHLWPQPYRIYIDELSNNWFSFLGYLLSVKMKTSVVRIKMLDDSFITDLITKKFDPIAPTTLLIGSLAKEKFCDISGHPISRLAWTGLTDDDILDRFDQIWRNIFHYHSGSSKKDGLYRIKYILRLPCAKTLACKHKSAIRVVRERFGSELFTKSSPKERESIFLSFSKTRSQRERIWHSDIIQRNPLINSCRKKHN.

Belongs to the intron maturase 2 family. MatK subfamily.

The protein resides in the plastid. It localises to the chloroplast. Its function is as follows. Usually encoded in the trnK tRNA gene intron. Probably assists in splicing its own and other chloroplast group II introns. The protein is Maturase K of Dioon edule (Virgin's palm).